Here is a 186-residue protein sequence, read N- to C-terminus: Protein C (186 aa).

Over residues 1–15 (MSKTDWNASGLSRPS) the composition is skewed to polar residues. The interval 1–45 (MSKTDWNASGLSRPSPSAHWPSRKPWQHGQKYQTTQDRTEPPARK) is disordered.

Belongs to the morbillivirus protein C family. As to quaternary structure, interacts with the phosphoprotein (via C-terminus); this interaction allows C to associate with the ribonucleocapsid.

The protein resides in the host nucleus. The protein localises to the host cytoplasmic vesicle. Ribonucleocapsid-associated protein that interacts with the phosphoprotein (P), thereby increasing replication accuracy and processivity of the polymerase complex. In Homo sapiens (Human), this protein is Protein C (P/V/C).